Consider the following 934-residue polypeptide: AP-2 complex subunit alpha (934 aa).

The interval 623 to 670 (RVPENAEIRETKSPVPNSHNNAHSNAQTNHTSSANNANASSDLLGLST) is disordered. The segment covering 636–645 (PVPNSHNNAH) has biased composition (polar residues). Residues 646-663 (SNAQTNHTSSANNANASS) are compositionally biased toward low complexity.

This sequence belongs to the adapter complexes large subunit family. As to quaternary structure, adaptor protein complex 2 (AP-2) is a heterotetramer composed of two large adaptins (alpha-type and beta-type subunits), a medium adaptin (mu-type subunit AP50) and a small adaptin (sigma-type subunit AP17).

It localises to the cell membrane. The protein localises to the membrane. The protein resides in the coated pit. Functionally, adaptins are components of the adapter complexes which link clathrin to receptors in coated vesicles. Clathrin-associated protein complexes are believed to interact with the cytoplasmic tails of membrane proteins, leading to their selection and concentration. Alpha adaptin is a subunit of the plasma membrane adapter. The protein is AP-2 complex subunit alpha of Anopheles gambiae (African malaria mosquito).